Here is a 222-residue protein sequence, read N- to C-terminus: Charged multivesicular body protein 3 (222 aa).

G2 carries the N-myristoyl glycine lipid modification. The interval 2–113 (GLFGKTQEKP…LQKSTEVMKA (112 aa)) is intramolecular interaction with C-terminus. The stretch at 22–54 (KIRKEMRVVDRQIRDIQREEEKVKRSVKDAAKK) forms a coiled coil. Important for autoinhibitory function stretches follow at residues 59-64 (VCIVLA) and 168-169 (IL). Positions 141 to 222 (EEMLEDTFES…MQSRLATLRS (82 aa)) form a coiled coil. Residues 151 to 220 (MDDQEEMEEE…EAMQSRLATL (70 aa)) are intramolecular interaction with N-terminus. The interaction with VPS4A stretch occupies residues 151-222 (MDDQEEMEEE…MQSRLATLRS (72 aa)). K179 participates in a covalent cross-link: Glycyl lysine isopeptide (Lys-Gly) (interchain with G-Cter in ubiquitin). The segment at 180–222 (APSKVTDALPEPEPPGAMAASEDEEEEEEALEAMQSRLATLRS) is disordered. S200 is subject to Phosphoserine. Positions 200–210 (SEDEEEEEEAL) are enriched in acidic residues. An MIT-interacting motif motif is present at residues 201–211 (EDEEEEEEALE). Interaction with STAMBP regions lie at residues 203 to 207 (EEEEE) and 221 to 222 (RS).

It belongs to the SNF7 family. In terms of assembly, probable core component of the endosomal sorting required for transport complex III (ESCRT-III). ESCRT-III components are thought to multimerize to form a flat lattice on the perimeter membrane of the endosome. Several assembly forms of ESCRT-III may exist that interact and act sequentially. Forms a metastable monomer in solution; its core structure (without part of the putative autoinhibitory C-terminal acidic region) oligomerizes into a flat lattice via two different dimerization interfaces. In vitro, heteromerizes with CHMP2A (but not CHMP4) to form helical tubular structures that expose membrane-interacting sites on the outside whereas VPS4B can associate on the inside of the tubule. May interact with IGFBP7; the relevance of such interaction however remains unclear. Interacts with CHMP2A. Interacts with CHMP4A; the interaction requires the release of CHMP4A autoinhibition. Interacts with VPS4A. Interacts with STAMBP; the interaction appears to relieve the autoinhibition of CHMP3. Interacts with VTA1. In terms of tissue distribution, widely expressed. Expressed in heart, brain, placenta, lung, liver, skeletal muscle, kidney and pancreas.

The protein resides in the cytoplasm. Its subcellular location is the cytosol. It is found in the membrane. The protein localises to the endosome. It localises to the late endosome membrane. In terms of biological role, probable core component of the endosomal sorting required for transport complex III (ESCRT-III) which is involved in multivesicular bodies (MVBs) formation and sorting of endosomal cargo proteins into MVBs. MVBs contain intraluminal vesicles (ILVs) that are generated by invagination and scission from the limiting membrane of the endosome and mostly are delivered to lysosomes enabling degradation of membrane proteins, such as stimulated growth factor receptors, lysosomal enzymes and lipids. The MVB pathway appears to require the sequential function of ESCRT-O, -I,-II and -III complexes. ESCRT-III proteins mostly dissociate from the invaginating membrane before the ILV is released. The ESCRT machinery also functions in topologically equivalent membrane fission events, such as the terminal stages of cytokinesis and the budding of enveloped viruses (HIV-1 and other lentiviruses). ESCRT-III proteins are believed to mediate the necessary vesicle extrusion and/or membrane fission activities, possibly in conjunction with the AAA ATPase VPS4. Selectively binds to phosphatidylinositol 3,5-bisphosphate PtdIns(3,5)P2 and PtdIns(3,4)P2 in preference to other phosphoinositides tested. Involved in late stages of cytokinesis. Plays a role in endosomal sorting/trafficking of EGF receptor. Isoform 2 prevents stress-mediated cell death and accumulation of reactive oxygen species when expressed in yeast cells. This is Charged multivesicular body protein 3 (CHMP3) from Homo sapiens (Human).